A 304-amino-acid chain; its full sequence is Putative AraC-like transcription regulator (304 aa).

The HTH araC/xylS-type domain maps to 202 to 300; the sequence is ATALTCLHRD…GMPPGDYRKH (99 aa). 2 DNA-binding regions (H-T-H motif) span residues 219 to 240 and 267 to 290; these read ADLA…KATV and LASI…KRVL.

In Streptomyces lividans, this protein is Putative AraC-like transcription regulator.